A 66-amino-acid polypeptide reads, in one-letter code: Large ribosomal subunit protein bL33c (66 aa).

Belongs to the bacterial ribosomal protein bL33 family.

The protein resides in the plastid. It is found in the chloroplast. This Daucus carota (Wild carrot) protein is Large ribosomal subunit protein bL33c.